Here is a 121-residue protein sequence, read N- to C-terminus: Large ribosomal subunit protein bL12 (121 aa).

It belongs to the bacterial ribosomal protein bL12 family. In terms of assembly, homodimer. Part of the ribosomal stalk of the 50S ribosomal subunit. Forms a multimeric L10(L12)X complex, where L10 forms an elongated spine to which 2 to 4 L12 dimers bind in a sequential fashion. Binds GTP-bound translation factors.

Functionally, forms part of the ribosomal stalk which helps the ribosome interact with GTP-bound translation factors. Is thus essential for accurate translation. This chain is Large ribosomal subunit protein bL12, found in Leuconostoc mesenteroides subsp. mesenteroides (strain ATCC 8293 / DSM 20343 / BCRC 11652 / CCM 1803 / JCM 6124 / NCDO 523 / NBRC 100496 / NCIMB 8023 / NCTC 12954 / NRRL B-1118 / 37Y).